The primary structure comprises 233 residues: Adenosylcobinamide-GDP ribazoletransferase (233 aa).

The next 7 helical transmembrane spans lie at 24–44, 46–66, 96–116, 117–137, 158–178, 181–198, and 209–229; these read LWAL…VLYL, LPLS…LLHL, IAGV…LPLL, PFYA…LALA, QLTL…YIEP, ISSL…RLSL, and IGAV…VVWV.

It belongs to the CobS family. Mg(2+) serves as cofactor.

The protein resides in the cell membrane. The catalysed reaction is alpha-ribazole + adenosylcob(III)inamide-GDP = adenosylcob(III)alamin + GMP + H(+). The enzyme catalyses alpha-ribazole 5'-phosphate + adenosylcob(III)inamide-GDP = adenosylcob(III)alamin 5'-phosphate + GMP + H(+). The protein operates within cofactor biosynthesis; adenosylcobalamin biosynthesis; adenosylcobalamin from cob(II)yrinate a,c-diamide: step 7/7. Functionally, joins adenosylcobinamide-GDP and alpha-ribazole to generate adenosylcobalamin (Ado-cobalamin). Also synthesizes adenosylcobalamin 5'-phosphate from adenosylcobinamide-GDP and alpha-ribazole 5'-phosphate. The protein is Adenosylcobinamide-GDP ribazoletransferase of Thermococcus gammatolerans (strain DSM 15229 / JCM 11827 / EJ3).